Here is a 423-residue protein sequence, read N- to C-terminus: Gamma-glutamyl phosphate reductase (423 aa).

It belongs to the gamma-glutamyl phosphate reductase family.

It localises to the cytoplasm. It carries out the reaction L-glutamate 5-semialdehyde + phosphate + NADP(+) = L-glutamyl 5-phosphate + NADPH + H(+). The protein operates within amino-acid biosynthesis; L-proline biosynthesis; L-glutamate 5-semialdehyde from L-glutamate: step 2/2. In terms of biological role, catalyzes the NADPH-dependent reduction of L-glutamate 5-phosphate into L-glutamate 5-semialdehyde and phosphate. The product spontaneously undergoes cyclization to form 1-pyrroline-5-carboxylate. In Paraburkholderia phymatum (strain DSM 17167 / CIP 108236 / LMG 21445 / STM815) (Burkholderia phymatum), this protein is Gamma-glutamyl phosphate reductase.